Here is a 703-residue protein sequence, read N- to C-terminus: Fibulin-1 (703 aa).

The N-terminal stretch at 1–29 (MERAAPSRRVPLPLLLLGGLALLAAGVDA) is a signal peptide. Intrachain disulfides connect Cys36–Cys61, Cys37–Cys68, Cys50–Cys69, Cys78–Cys109, Cys91–Cys110, Cys112–Cys136, Cys113–Cys143, Cys126–Cys144, Cys180–Cys190, Cys186–Cys199, Cys201–Cys214, Cys220–Cys233, Cys227–Cys242, Cys248–Cys260, Cys266–Cys279, Cys273–Cys288, Cys294–Cys306, Cys312–Cys325, Cys319–Cys334, Cys341–Cys354, Cys360–Cys373, Cys367–Cys382, Cys384–Cys397, Cys403–Cys415, Cys411–Cys424, Cys426–Cys439, Cys445–Cys454, Cys450–Cys463, Cys465–Cys479, Cys485–Cys498, Cys494–Cys507, Cys509–Cys523, Cys529–Cys542, Cys536–Cys551, and Cys556–Cys577. Anaphylatoxin-like domains are found at residues 36–76 (CCAD…LEEL), 77–111 (HCAT…RCCH), and 112–144 (CCLL…QACC). N-linked (GlcNAc...) (complex) asparagine glycosylation occurs at Asn98. In terms of domain architecture, EGF-like 1 spans 176–215 (LNDRCRGGGPCKQQCRDTGDEVVCSCFVGYQLLSDGVSCE). The EGF-like 2; calcium-binding domain maps to 216-261 (DVNECITGSHSCRLGESCINTVGSFRCQRDSSCGTGYELTEDNSCK). Residues 262-307 (DIDECESGIHNCLPDFICQNTLGSFRCRPKLQCKSGFIQDALGNCI) enclose the EGF-like 3; calcium-binding domain. Residues 308–355 (DINECLSISAPCPIGHTCINTEGSYTCQKNVPNCGRGYHLNEEGTRCV) enclose the EGF-like 4; calcium-binding domain. The EGF-like 5; calcium-binding domain maps to 356 to 398 (DVDECAPPAEPCGKGHRCVNSPGSFRCECKTGYYFDGISRMCV). The segment at 356 to 440 (DVDECAPPAE…RLSVDGRSCE (85 aa)) is self-association and FN1-binding; calcium is necessary for homotypic binding, but not for heterotypic binding. The 42-residue stretch at 399–440 (DVNECQRYPGRLCGHKCENTLGSYLCSCSVGFRLSVDGRSCE) folds into the EGF-like 6; calcium-binding domain. The EGF-like 7; calcium-binding domain occupies 441-480 (DINECSSSPCSQECANVYGSYQCYCRRGYQLSDVDGVTCE). Positions 481–524 (DIDECALPTGGHICSYRCINIPGSFQCSCPSSGYRLAPNGRNCQ) constitute an EGF-like 8; calcium-binding domain. An EGF-like 9; calcium-binding domain is found at 525-578 (DIDECVTGIHNCSINETCFNIQGGFRCLAFECPENYRRSAATLQQEKTDTVRCI). N-linked (GlcNAc...) asparagine glycans are attached at residues Asn535 and Asn539.

Belongs to the fibulin family. In terms of assembly, homomultimerizes and interacts with various extracellular matrix components such as FN1, LAMA1, LAMA2, NID, ACAN, CSPG2 and type IV collagen. Also interacts with APP and FGB. Interacts with FBLN7. Interacts with CCN3. As to quaternary structure, (Microbial infection) Interacts with human papillomavirus/HPV type 16, 18 and 31 proteins E6. Isoform A and isoform B are only expressed in placenta. Isoform C and isoform D are expressed in a variety of tissues and cultured cells.

The protein resides in the secreted. Its subcellular location is the extracellular space. The protein localises to the extracellular matrix. Functionally, incorporated into fibronectin-containing matrix fibers. May play a role in cell adhesion and migration along protein fibers within the extracellular matrix (ECM). Could be important for certain developmental processes and contribute to the supramolecular organization of ECM architecture, in particular to those of basement membranes. Has been implicated in a role in cellular transformation and tumor invasion, it appears to be a tumor suppressor. May play a role in haemostasis and thrombosis owing to its ability to bind fibrinogen and incorporate into clots. Could play a significant role in modulating the neurotrophic activities of APP, particularly soluble APP. This chain is Fibulin-1 (FBLN1), found in Homo sapiens (Human).